A 204-amino-acid polypeptide reads, in one-letter code: Tetraspanin-13 (204 aa).

At 1–19 (MVCGGFSCSKNCLCALNLL) the chain is on the cytoplasmic side. A helical membrane pass occupies residues 20 to 40 (YTLVSLLLIGIAAWGIGFGLI). Topologically, residues 41–44 (SSLR) are extracellular. Residues 45-65 (VVGVVIAVGIFLFLIALVGLI) form a helical membrane-spanning segment. The Cytoplasmic portion of the chain corresponds to 66 to 72 (GAVKHHQ). The chain crosses the membrane as a helical span at residues 73-93 (VLLFFYMIILLLVFIVQFSVS). Residues 94 to 167 (CACLALNREQ…IGEYAGEVLR (74 aa)) are Extracellular-facing. N-linked (GlcNAc...) asparagine glycans are attached at residues Asn-113 and Asn-137. Ser-143 is subject to Phosphoserine. The chain crosses the membrane as a helical span at residues 168–188 (FVGGIGLFFSFTEILGVWLTY). Residues 189–204 (RYRNQKDPRANPSAFL) lie on the Cytoplasmic side of the membrane.

The protein belongs to the tetraspanin (TM4SF) family.

It localises to the membrane. This is Tetraspanin-13 (Tspan13) from Rattus norvegicus (Rat).